The sequence spans 109 residues: ATPase inhibitor mai-2, mitochondrial (109 aa).

Disordered regions lie at residues 18–39 and 73–109; these read FSAGGHGDGAGRGGGSGGSIRD and EEVKHHEGQLENHKKVLERHQQRISEIEAQERALGKE. Positions 21–35 are enriched in gly residues; that stretch reads GGHGDGAGRGGGSGG. Residues 55-109 adopt a coiled-coil conformation; sequence YFYKKQKAQLQELREHIQEEVKHHEGQLENHKKVLERHQQRISEIEAQERALGKE.

It belongs to the ATPase inhibitor family.

It localises to the mitochondrion. Thought to be a regulatory component of the ATP-synthesizing complex in the mitochondria. Activity is pH dependent. The chain is ATPase inhibitor mai-2, mitochondrial (mai-2) from Caenorhabditis elegans.